We begin with the raw amino-acid sequence, 73 residues long: Protein BP4C (73 aa).

As to expression, pollen specific.

This is Protein BP4C (BP4C) from Brassica napus (Rape).